Reading from the N-terminus, the 272-residue chain is Cell division protein ZipA (272 aa).

The Periplasmic portion of the chain corresponds to 1-4; sequence METH. Residues 5–25 traverse the membrane as a helical segment; it reads ILFFILAGLLIAVLIGYSIWS. Residues 26–272 are Cytoplasmic-facing; the sequence is ARREKSRIFS…RQNYLLRVAN (247 aa).

It belongs to the ZipA family. In terms of assembly, interacts with FtsZ via their C-terminal domains.

It is found in the cell inner membrane. Essential cell division protein that stabilizes the FtsZ protofilaments by cross-linking them and that serves as a cytoplasmic membrane anchor for the Z ring. Also required for the recruitment to the septal ring of downstream cell division proteins. In Glaesserella parasuis serovar 5 (strain SH0165) (Haemophilus parasuis), this protein is Cell division protein ZipA.